Reading from the N-terminus, the 414-residue chain is Serine--tRNA ligase (414 aa).

L-serine is bound at residue 230–232 (TSE). 261–263 (RQE) serves as a coordination point for ATP. Glu284 contributes to the L-serine binding site. 348 to 351 (EISS) is a binding site for ATP. Ser382 contributes to the L-serine binding site.

It belongs to the class-II aminoacyl-tRNA synthetase family. Type-1 seryl-tRNA synthetase subfamily. In terms of assembly, homodimer. The tRNA molecule binds across the dimer.

Its subcellular location is the cytoplasm. It carries out the reaction tRNA(Ser) + L-serine + ATP = L-seryl-tRNA(Ser) + AMP + diphosphate + H(+). It catalyses the reaction tRNA(Sec) + L-serine + ATP = L-seryl-tRNA(Sec) + AMP + diphosphate + H(+). It participates in aminoacyl-tRNA biosynthesis; selenocysteinyl-tRNA(Sec) biosynthesis; L-seryl-tRNA(Sec) from L-serine and tRNA(Sec): step 1/1. Functionally, catalyzes the attachment of serine to tRNA(Ser). Is also able to aminoacylate tRNA(Sec) with serine, to form the misacylated tRNA L-seryl-tRNA(Sec), which will be further converted into selenocysteinyl-tRNA(Sec). The chain is Serine--tRNA ligase from Campylobacter fetus subsp. fetus (strain 82-40).